Reading from the N-terminus, the 2036-residue chain is Proline-rich protein 12 (2036 aa).

Disordered stretches follow at residues 210 to 283 (GGGV…RALP), 331 to 587 (CSPL…GAPG), and 649 to 697 (APSP…DPQR). Pro residues predominate over residues 223-240 (QTPPYRPGPPDPPPPPRH). Over residues 249–258 (ASSSAAAAAA) the composition is skewed to low complexity. Phosphoserine is present on residues serine 332 and serine 340. Residues 340-365 (SPGAGEPSKAGPSGATAGASGRATGP) show a composition bias toward low complexity. Composition is skewed to gly residues over residues 367 to 380 (AAGGGGAGGGGGGY) and 391 to 400 (TGKGGYGAAA). Composition is skewed to low complexity over residues 411 to 432 (STATPKCQSLGGPAAAYATGKA) and 441 to 458 (QAYSPGQPQGLLGPQAYG). Over residues 479 to 490 (PPQPPSGPPPPG) the composition is skewed to pro residues. Polar residues-rich tracts occupy residues 493–504 (TCQSYSPDQLQG) and 523–537 (GLPTASPSLSYSTGH). Over residues 543–558 (GHGGGWGPSSLGGGGE) the composition is skewed to gly residues. Serine 651 is modified (phosphoserine). The span at 673–683 (GLGGSGGAGGP) shows a compositional bias: gly residues. The residue at position 738 (threonine 738) is a Phosphothreonine. Disordered stretches follow at residues 758-850 (AFLQ…PLQL), 859-878 (LEPAAPSPRLRPEESLDPPG), 886-925 (ALEPLPPAPGDTGVGPPNSEGKDPAGAYRSPSPQGTKAPR), and 952-1068 (EMFG…CSTK). Residues 802–817 (LPSVLSHAPSPSPSAS) are compositionally biased toward low complexity. Residues 833–847 (PQPPPPPPPPPPPMP) show a composition bias toward pro residues. The residue at position 865 (serine 865) is a Phosphoserine. Positions 1037–1052 (AAPPPPPPPPPPPAPA) are enriched in pro residues. Serine 1077 and serine 1135 each carry phosphoserine. Disordered regions lie at residues 1120-1260 (RLPD…SLTR), 1294-1347 (RHPP…GGAL), 1376-1573 (TLPS…GEGI), and 1668-1840 (HRPP…PGRL). Low complexity predominate over residues 1182 to 1194 (PTTAGPASASTPT). Over residues 1199 to 1208 (KPRGRGRGRG) the composition is skewed to basic residues. Residues 1209–1223 (RKAEEAGGTRLEPLK) show a composition bias toward basic and acidic residues. Lysine 1223 bears the N6-acetyllysine mark. Over residues 1239–1257 (GTSSGDAISGTDHNSLDSS) the composition is skewed to polar residues. At threonine 1304 the chain carries Phosphothreonine. Composition is skewed to pro residues over residues 1306–1317 (PLSPPKSVPPSV) and 1324–1338 (PQPPATPAVPHPPPS). Residue serine 1308 is modified to Phosphoserine. Phosphoserine occurs at positions 1381, 1382, and 1387. Composition is skewed to pro residues over residues 1420-1438 (DGPPLAPAAAVPGPPPLPG) and 1458-1535 (PPTP…APSP). Residues 1541–1553 (PDTRPLHLAKKQE) show a composition bias toward basic and acidic residues. The residue at position 1561 (threonine 1561) is a Phosphothreonine. Serine 1568 bears the Phosphoserine mark. The span at 1691–1703 (APPPKAPAPPPKP) shows a compositional bias: pro residues. 2 stretches are compositionally biased toward basic and acidic residues: residues 1704-1715 (ETPEKTTSEKPP) and 1737-1769 (PVEKEKEKEKVTRGERPLRGERATSGRQTRPER). Threonine 1705 is subject to Phosphothreonine. The span at 1817-1829 (GSSSDSESSPGAP) shows a compositional bias: low complexity. Serine 1925 is subject to Phosphoserine.

It is found in the nucleus. Its subcellular location is the postsynaptic density. The protein resides in the synapse. It localises to the synaptosome. The polypeptide is Proline-rich protein 12 (Homo sapiens (Human)).